The chain runs to 142 residues: Galectin-10 (142 aa).

Ser2 is modified (N-acetylserine). The 133-residue stretch at 6–138 (VPYTEAASLS…DISLTKFNVS (133 aa)) folds into the Galectin domain.

Interacts with CEL. In terms of tissue distribution, expressed abundantly in the bone marrow. Expressed exclusively by eosinophils and basophils. Not detected in monocytes and neutrophils. Expressed in CD25-positive regulatory T-cells (Treg) (at protein level). Found in intestinal tissue from patients with Celiac disease, expression is directly related to the histological grade of mucosal damage and to the number of eosinophils found in the duodenal lesion (at protein level). Found in sputum of patients with eosinophilic inflammatory diseases such as asthma (at protein level).

It is found in the cytoplasm. The protein resides in the cytosol. It localises to the cytoplasmic granule. Its function is as follows. Regulates immune responses through the recognition of cell-surface glycans. Essential for the anergy and suppressive function of CD25-positive regulatory T-cells (Treg). The protein is Galectin-10 (CLC) of Homo sapiens (Human).